The sequence spans 39 residues: Bacteriocin lactococcin-G subunit alpha (39 aa).

In terms of assembly, bacteriocin activity requires interaction of alpha and beta peptides in a molar ratio of 7:1 or 8:1 respectively.

Kills Lactococci. This is Bacteriocin lactococcin-G subunit alpha from Lactococcus lactis subsp. lactis (Streptococcus lactis).